Consider the following 118-residue polypeptide: Putative pterin-4-alpha-carbinolamine dehydratase (118 aa).

This sequence belongs to the pterin-4-alpha-carbinolamine dehydratase family.

The catalysed reaction is (4aS,6R)-4a-hydroxy-L-erythro-5,6,7,8-tetrahydrobiopterin = (6R)-L-erythro-6,7-dihydrobiopterin + H2O. The polypeptide is Putative pterin-4-alpha-carbinolamine dehydratase (Pseudomonas fluorescens (strain SBW25)).